An 81-amino-acid polypeptide reads, in one-letter code: Photosystem I iron-sulfur center (81 aa).

4Fe-4S ferredoxin-type domains lie at 2-31 and 39-68; these read SHAV…MVPW and IASS…IRVY. [4Fe-4S] cluster is bound by residues Cys-11, Cys-14, Cys-17, Cys-21, Cys-48, Cys-51, Cys-54, and Cys-58.

As to quaternary structure, the cyanobacterial PSI reaction center is composed of one copy each of PsaA,B,C,D,E,F,I,J,K,L,M and X, and forms trimeric complexes. [4Fe-4S] cluster is required as a cofactor.

The protein resides in the cellular thylakoid membrane. The enzyme catalyses reduced [plastocyanin] + hnu + oxidized [2Fe-2S]-[ferredoxin] = oxidized [plastocyanin] + reduced [2Fe-2S]-[ferredoxin]. Its function is as follows. Apoprotein for the two 4Fe-4S centers FA and FB of photosystem I (PSI); essential for photochemical activity. FB is the terminal electron acceptor of PSI, donating electrons to ferredoxin. The C-terminus interacts with PsaA/B/D and helps assemble the protein into the PSI complex. Required for binding of PsaD and PsaE to PSI. PSI is a plastocyanin/cytochrome c6-ferredoxin oxidoreductase, converting photonic excitation into a charge separation, which transfers an electron from the donor P700 chlorophyll pair to the spectroscopically characterized acceptors A0, A1, FX, FA and FB in turn. The chain is Photosystem I iron-sulfur center from Prochlorococcus marinus (strain NATL2A).